A 91-amino-acid polypeptide reads, in one-letter code: Large ribosomal subunit protein bL31B-1 (91 aa).

The protein belongs to the bacterial ribosomal protein bL31 family. Type B subfamily. Part of the 50S ribosomal subunit.

The protein is Large ribosomal subunit protein bL31B-1 of Streptomyces avermitilis (strain ATCC 31267 / DSM 46492 / JCM 5070 / NBRC 14893 / NCIMB 12804 / NRRL 8165 / MA-4680).